Reading from the N-terminus, the 528-residue chain is D-3-phosphoglycerate dehydrogenase (528 aa).

Residues 151 to 152, D171, 230 to 232, and D256 each bind NAD(+); these read RI and AAR. R232 is a catalytic residue. E261 is an active-site residue. The active-site Proton donor is the H279. 279 to 282 contacts NAD(+); sequence HLGA. Residues 455–528 enclose the ACT domain; it reads NLVIRYVDQP…ANKLEVVNLS (74 aa).

Belongs to the D-isomer specific 2-hydroxyacid dehydrogenase family.

It catalyses the reaction (2R)-3-phosphoglycerate + NAD(+) = 3-phosphooxypyruvate + NADH + H(+). The catalysed reaction is (R)-2-hydroxyglutarate + NAD(+) = 2-oxoglutarate + NADH + H(+). It participates in amino-acid biosynthesis; L-serine biosynthesis; L-serine from 3-phospho-D-glycerate: step 1/3. Its function is as follows. Catalyzes the reversible oxidation of 3-phospho-D-glycerate to 3-phosphonooxypyruvate, the first step of the phosphorylated L-serine biosynthesis pathway. Also catalyzes the reversible oxidation of 2-hydroxyglutarate to 2-oxoglutarate. This Mycobacterium leprae (strain TN) protein is D-3-phosphoglycerate dehydrogenase (serA).